The primary structure comprises 101 residues: Small ribosomal subunit protein uS14 (101 aa).

Belongs to the universal ribosomal protein uS14 family. Part of the 30S ribosomal subunit. Contacts proteins S3 and S10.

Binds 16S rRNA, required for the assembly of 30S particles and may also be responsible for determining the conformation of the 16S rRNA at the A site. The polypeptide is Small ribosomal subunit protein uS14 (Burkholderia vietnamiensis (strain G4 / LMG 22486) (Burkholderia cepacia (strain R1808))).